The primary structure comprises 415 residues: WD repeat and FYVE domain-containing protein 2 (415 aa).

WD repeat units follow at residues 71 to 103 (HHFMPVAPTSLYYSEETYKLLVGLINGNVYEFS), 119 to 148 (CHAGPISGLGFALSSELIFSCSRDKSIVWH), 202 to 232 (AHTNAITSLTWDGNKKVLYSGSSDHLIIMWD), and 245 to 284 (GHNGKVTTLCAAPAAKRLFSADEHGKLMCWDMNCKRVETP). The FYVE-type zinc-finger motif lies at 286-357 (WKTSDCCQKC…ICNDCNARMK (72 aa)). Residues C292, C295, C319, C322, C327, C330, C349, and C352 each coordinate Zn(2+). A WD 5 repeat occupies 373 to 403 (EIHTGITAMHLQETLGLLVTSGQNRVIMIWD).

In terms of biological role, plays a role in coelomocyte endocytosis. This Caenorhabditis elegans protein is WD repeat and FYVE domain-containing protein 2 (wdfy-2).